The primary structure comprises 199 residues: Nucleoside triphosphate pyrophosphatase (199 aa).

The active-site Proton acceptor is the aspartate 76.

Belongs to the Maf family. It depends on a divalent metal cation as a cofactor.

It is found in the cytoplasm. It carries out the reaction a ribonucleoside 5'-triphosphate + H2O = a ribonucleoside 5'-phosphate + diphosphate + H(+). It catalyses the reaction a 2'-deoxyribonucleoside 5'-triphosphate + H2O = a 2'-deoxyribonucleoside 5'-phosphate + diphosphate + H(+). Its function is as follows. Nucleoside triphosphate pyrophosphatase. May have a dual role in cell division arrest and in preventing the incorporation of modified nucleotides into cellular nucleic acids. This is Nucleoside triphosphate pyrophosphatase from Roseobacter denitrificans (strain ATCC 33942 / OCh 114) (Erythrobacter sp. (strain OCh 114)).